The sequence spans 339 residues: Large ribosomal subunit protein uL11m (339 aa).

It belongs to the universal ribosomal protein uL11 family.

Its subcellular location is the mitochondrion. In Acanthamoeba castellanii (Amoeba), this protein is Large ribosomal subunit protein uL11m (RPL11).